Reading from the N-terminus, the 218-residue chain is MDFTNERRAMIDLLIRRGISDQRVLDAMAQTPRHVFVPAHERSHAYSDQALPIGEGQTISQPYMVALMIEALQLAPTDRVLEIGAGSGYAAAVLSRIVAKVHTIECREALAASAAALLRTLGYDNVTVHVGDGTQGLPDYAPFDAILVSAASPWVPAPLREQLASSGRLVIPVGGRQAQILLRLRRTGDTLRTERLCDVRFVPLIGGHAWTTEHYPER.

Residue Ser-60 is part of the active site.

Belongs to the methyltransferase superfamily. L-isoaspartyl/D-aspartyl protein methyltransferase family.

It is found in the cytoplasm. It catalyses the reaction [protein]-L-isoaspartate + S-adenosyl-L-methionine = [protein]-L-isoaspartate alpha-methyl ester + S-adenosyl-L-homocysteine. Functionally, catalyzes the methyl esterification of L-isoaspartyl residues in peptides and proteins that result from spontaneous decomposition of normal L-aspartyl and L-asparaginyl residues. It plays a role in the repair and/or degradation of damaged proteins. The chain is Protein-L-isoaspartate O-methyltransferase from Roseiflexus castenholzii (strain DSM 13941 / HLO8).